The primary structure comprises 178 residues: ATP synthase subunit delta (178 aa).

The protein belongs to the ATPase delta chain family. F-type ATPases have 2 components, F(1) - the catalytic core - and F(0) - the membrane proton channel. F(1) has five subunits: alpha(3), beta(3), gamma(1), delta(1), epsilon(1). F(0) has three main subunits: a(1), b(2) and c(10-14). The alpha and beta chains form an alternating ring which encloses part of the gamma chain. F(1) is attached to F(0) by a central stalk formed by the gamma and epsilon chains, while a peripheral stalk is formed by the delta and b chains.

It localises to the cell membrane. Functionally, f(1)F(0) ATP synthase produces ATP from ADP in the presence of a proton or sodium gradient. F-type ATPases consist of two structural domains, F(1) containing the extramembraneous catalytic core and F(0) containing the membrane proton channel, linked together by a central stalk and a peripheral stalk. During catalysis, ATP synthesis in the catalytic domain of F(1) is coupled via a rotary mechanism of the central stalk subunits to proton translocation. Its function is as follows. This protein is part of the stalk that links CF(0) to CF(1). It either transmits conformational changes from CF(0) to CF(1) or is implicated in proton conduction. The polypeptide is ATP synthase subunit delta (Streptococcus sanguinis (strain SK36)).